Reading from the N-terminus, the 978-residue chain is Tyrosine-protein kinase transforming protein fms (978 aa).

The Extracellular portion of the chain corresponds to 1–543 (RMPSGPGHYG…IGAHTPLPDE (543 aa)). 5 Ig-like C2-type domains span residues 55 to 134 (PVIQ…IHLY), 141 to 231 (PWKV…KVQK), 236 to 331 (PATL…RVVE), 333 to 431 (AYSN…LTLR), and 434 to 533 (PEVR…WPIS). A disulfide bridge links Cys-76 with Cys-118. N-linked (GlcNAc...) asparagine; by host glycans are attached at residues Asn-79, Asn-107, Asn-128, Asn-187, Asn-309, Asn-320, Asn-336, Asn-369, Asn-444, Asn-511, and Asn-524. Intrachain disulfides connect Cys-161-Cys-211 and Cys-258-Cys-312. A disulfide bond links Cys-451 and Cys-516. The helical transmembrane segment at 544 to 568 (LLFTPVLLTCMSIMALLLLLLLLLL) threads the bilayer. Over 569–978 (YKYKQKPKYQ…PWQRTPPVAR (410 aa)) the chain is Cytoplasmic. The Protein kinase domain maps to 613–942 (LQFGKTLGTG…PTFQQICSLL (330 aa)). ATP is bound by residues 619–627 (LGTGAFGKV) and Lys-647. The active-site Proton acceptor is the Asp-810. At Tyr-841 the chain carries Phosphotyrosine; by autocatalysis. The interval 952-978 (VPNYTNLPSSSSSRLLRPWQRTPPVAR) is disordered. Residues 958–969 (LPSSSSSRLLRP) are compositionally biased toward low complexity. Thr-973 bears the Phosphothreonine mark.

Belongs to the protein kinase superfamily. Tyr protein kinase family. CSF-1/PDGF receptor subfamily.

It is found in the membrane. It catalyses the reaction L-tyrosyl-[protein] + ATP = O-phospho-L-tyrosyl-[protein] + ADP + H(+). Functionally, truncated version of the receptor for colony-stimulating factor 1 (CSF-1). This chain is Tyrosine-protein kinase transforming protein fms (V-FMS), found in Felidae (cat family).